Reading from the N-terminus, the 158-residue chain is MAESINSLEELGTVAKTEAAAPVHVQKLDAQGRAYATGKRKDAVARVWVKPGTGKITVNDKEFEKYFARPVLQMILQQPIVASNRAGQFDIVATVAGGGLSGQAGAVRHGISKALTYYEPGLRTVLKKGGFLTRDSRVVERKKYGKAKARRSFQFSKR.

It belongs to the universal ribosomal protein uS9 family.

This Brucella canis (strain ATCC 23365 / NCTC 10854 / RM-666) protein is Small ribosomal subunit protein uS9.